We begin with the raw amino-acid sequence, 306 residues long: Hydroxypyruvate reductase (306 aa).

NAD(+) is bound by residues 152–153 (NI), aspartate 172, 228–230 (TAR), and aspartate 254. Arginine 230 is an active-site residue. Glutamate 259 is an active-site residue. Histidine 280 serves as the catalytic Proton donor. 280 to 283 (HIGA) contacts NAD(+).

It belongs to the D-isomer specific 2-hydroxyacid dehydrogenase family.

It carries out the reaction (R)-glycerate + NAD(+) = 3-hydroxypyruvate + NADH + H(+). It catalyses the reaction (R)-glycerate + NADP(+) = 3-hydroxypyruvate + NADPH + H(+). In terms of biological role, involved in the degradation of L-serine via 3-hydroxypyruvate. Catalyzes the non-reversible reduction of 3-hydroxypyruvate to yield D-glycerate. This chain is Hydroxypyruvate reductase, found in Thermotoga maritima (strain ATCC 43589 / DSM 3109 / JCM 10099 / NBRC 100826 / MSB8).